The following is a 492-amino-acid chain: N-succinylglutamate 5-semialdehyde dehydrogenase (492 aa).

Gly220–Gly225 is an NAD(+) binding site. Catalysis depends on residues Glu243 and Cys277.

It belongs to the aldehyde dehydrogenase family. AstD subfamily.

The catalysed reaction is N-succinyl-L-glutamate 5-semialdehyde + NAD(+) + H2O = N-succinyl-L-glutamate + NADH + 2 H(+). It functions in the pathway amino-acid degradation; L-arginine degradation via AST pathway; L-glutamate and succinate from L-arginine: step 4/5. Catalyzes the NAD-dependent reduction of succinylglutamate semialdehyde into succinylglutamate. This Salmonella schwarzengrund (strain CVM19633) protein is N-succinylglutamate 5-semialdehyde dehydrogenase.